We begin with the raw amino-acid sequence, 431 residues long: Foot protein 1 variant 2 (431 aa).

The N-terminal stretch at 1–20 (MARNMNILTLFAVLLGSASA) is a signal peptide. Y22 bears the 3',4'-dihydroxyphenylalanine mark. A 4-hydroxyproline modification is found at P33. The A-1; approximate repeat unit spans residues 41–50 (VPPPAWTAWK). A 13 X 10 AA A-P-P-P-A-W-T-A-W-K region spans residues 41–270 (VPPPAWTAWK…APPPAWTAWK (230 aa)). A 7'-hydroxytryptophan mark is found at W46, W49, W56, and W59. W46, W49, W56, and W59 each carry a C-linked (Man) hydroxytryptophan glycan. Residues 51-60 (AHPPAWTAWK) form an A-2; approximate repeat. Residues 61-70 (ATPKPWTAWK) form a B-1 repeat. Residues 61-310 (ATPKPWTAWK…ATPKPWTAWR (250 aa)) are 27 X 10 AA A-T-P-K-P-W-T-A-W-K. P65 is subject to 4-hydroxyproline. W66 carries a C-linked (Man) tryptophan glycan. W69 carries the post-translational modification 7'-hydroxytryptophan. C-linked (Man) hydroxytryptophan glycosylation occurs at W69. One copy of the A-3 repeat lies at 71–80 (APPPAWTAWK). 4-hydroxyproline occurs at positions 72, 73, and 74. Residues W76 and W79 each carry the 7'-hydroxytryptophan modification. C-linked (Man) hydroxytryptophan glycosylation is found at W76 and W79. A B-2 repeat occupies 81–90 (ATPKPWTAWK). 4-hydroxyproline is present on P85. W86 is a glycosylation site (C-linked (Man) tryptophan). W89 carries the 7'-hydroxytryptophan modification. The C-linked (Man) hydroxytryptophan glycan is linked to W89. Residues 91-100 (APPPTWTAWK) form an A-4; approximate repeat. Residues P92, P93, and P94 each carry the 4-hydroxyproline modification. Residues W96 and W99 each carry the 7'-hydroxytryptophan modification. C-linked (Man) hydroxytryptophan glycosylation is found at W96 and W99. The B-3 repeat unit spans residues 101–110 (ATPKPWTAWK). The residue at position 105 (P105) is a 4-hydroxyproline. C-linked (Man) tryptophan glycosylation is present at W106. W109 carries the post-translational modification 7'-hydroxytryptophan. C-linked (Man) hydroxytryptophan glycosylation is present at W109. The stretch at 111-120 (APPPVWTAWK) is one A-5; approximate repeat. P112, P113, and P114 each carry 4-hydroxyproline. 2 positions are modified to 7'-hydroxytryptophan: W116 and W119. C-linked (Man) hydroxytryptophan glycans are attached at residues W116 and W119. Residues 121 to 130 (ATPKPRTAWK) form a B-4; approximate repeat. A 4-hydroxyproline modification is found at P125. W129 is subject to 7'-hydroxytryptophan. W129 carries a C-linked (Man) hydroxytryptophan glycan. The A-6; approximate repeat unit spans residues 131–140 (APPPTWTAWK). 4-hydroxyproline is present on residues P132, P133, and P134. 2 positions are modified to 7'-hydroxytryptophan: W136 and W139. Residues W136 and W139 are each glycosylated (C-linked (Man) hydroxytryptophan). Residues 141 to 150 (AAPKPWTAWK) form a B-5; approximate repeat. A 4-hydroxyproline modification is found at P145. The C-linked (Man) tryptophan glycan is linked to W146. Position 149 is a 7'-hydroxytryptophan (W149). A C-linked (Man) hydroxytryptophan glycan is attached at W149. A B-6 repeat occupies 151 to 160 (ATPKPWTAWK). P155 bears the 4-hydroxyproline mark. W156 carries C-linked (Man) tryptophan glycosylation. The residue at position 159 (W159) is a 7'-hydroxytryptophan. The C-linked (Man) hydroxytryptophan glycan is linked to W159. One copy of the A-7 repeat lies at 161–170 (APPPAWTAWK). 4-hydroxyproline occurs at positions 162, 163, and 164. A 7'-hydroxytryptophan mark is found at W166 and W169. W166 and W169 each carry a C-linked (Man) hydroxytryptophan glycan. The B-7 repeat unit spans residues 171–180 (ATPKPWTAWK). Position 175 is a 4-hydroxyproline (P175). A C-linked (Man) tryptophan glycan is attached at W176. Position 179 is a 7'-hydroxytryptophan (W179). C-linked (Man) hydroxytryptophan glycosylation occurs at W179. Residues 181–190 (ATPKPWTAWK) form a B-8 repeat. P185 is modified (4-hydroxyproline). C-linked (Man) tryptophan glycosylation is present at W186. 7'-hydroxytryptophan is present on W189. W189 carries C-linked (Man) hydroxytryptophan glycosylation. A B-9 repeat occupies 191 to 200 (ATPKPWTAWK). At P195 the chain carries 4-hydroxyproline. The C-linked (Man) tryptophan glycan is linked to W196. W199 is modified (7'-hydroxytryptophan). C-linked (Man) hydroxytryptophan glycosylation occurs at W199. Residues 201–210 (ATPKPWTVWK) form a B-10; approximate repeat. Position 205 is a 4-hydroxyproline (P205). The C-linked (Man) tryptophan glycan is linked to W206. At W209 the chain carries 7'-hydroxytryptophan. W209 carries C-linked (Man) hydroxytryptophan glycosylation. A B-11 repeat occupies 211 to 220 (ATPKPWTAWK). P215 is modified (4-hydroxyproline). W216 carries C-linked (Man) tryptophan glycosylation. The residue at position 219 (W219) is a 7'-hydroxytryptophan. C-linked (Man) hydroxytryptophan glycosylation is present at W219. The A-8 repeat unit spans residues 221–230 (APPPAWTAWK). 4-hydroxyproline occurs at positions 222, 223, and 224. W226 and W229 each carry 7'-hydroxytryptophan. W226 and W229 each carry a C-linked (Man) hydroxytryptophan glycan. A B-12 repeat occupies 231-240 (ATPKPWTAWK). P235 is subject to 4-hydroxyproline. A C-linked (Man) tryptophan glycan is attached at W236. W239 is subject to 7'-hydroxytryptophan. C-linked (Man) hydroxytryptophan glycosylation occurs at W239. One copy of the A-9 repeat lies at 241 to 250 (APPPAWTAWK). P242, P243, and P244 each carry 4-hydroxyproline. A 7'-hydroxytryptophan mark is found at W246 and W249. 2 C-linked (Man) hydroxytryptophan glycosylation sites follow: W246 and W249. A B-13 repeat occupies 251-260 (ATPKPWTAWK). A 4-hydroxyproline modification is found at P255. A C-linked (Man) tryptophan glycan is attached at W256. Residue W259 is modified to 7'-hydroxytryptophan. The C-linked (Man) hydroxytryptophan glycan is linked to W259. The A-10 repeat unit spans residues 261-270 (APPPAWTAWK). A 4-hydroxyproline mark is found at P262, P263, and P264. 7'-hydroxytryptophan is present on residues W266 and W269. C-linked (Man) hydroxytryptophan glycans are attached at residues W266 and W269. Residues 271–280 (ATPKPWTAWK) form a B-14 repeat. 4-hydroxyproline is present on P275. The C-linked (Man) tryptophan glycan is linked to W276. W279 bears the 7'-hydroxytryptophan mark. A C-linked (Man) hydroxytryptophan glycan is attached at W279. A B-15 repeat occupies 281–290 (ATPKPWTAWK). Position 285 is a 4-hydroxyproline (P285). A C-linked (Man) tryptophan glycan is attached at W286. At W289 the chain carries 7'-hydroxytryptophan. Residue W289 is glycosylated (C-linked (Man) hydroxytryptophan). One copy of the B-16 repeat lies at 291–300 (ATPKPWTAWK). P295 is modified (4-hydroxyproline). W296 is a glycosylation site (C-linked (Man) tryptophan). W299 carries the post-translational modification 7'-hydroxytryptophan. C-linked (Man) hydroxytryptophan glycosylation occurs at W299. A B-17; approximate repeat occupies 301 to 310 (ATPKPWTAWR). P305 is modified (4-hydroxyproline). W306 is a glycosylation site (C-linked (Man) tryptophan). W309 is subject to 7'-hydroxytryptophan. C-linked (Man) hydroxytryptophan glycosylation is present at W309. The segment at 322–377 (GHGYGGYGKPGKPGKPGSKGPRGPAGPPGATGKTGRTGATGKRGPPGYPGKPGVPG) is disordered. Residues 323–332 (HGYGGYGKPG) show a composition bias toward gly residues. The Collagen-like domain occupies 329 to 380 (GKPGKPGKPGSKGPRGPAGPPGATGKTGRTGATGKRGPPGYPGKPGVPGRNG). Residues 336–366 (KPGSKGPRGPAGPPGATGKTGRTGATGKRGP) show a composition bias toward low complexity. A 4-hydroxyproline mark is found at P367, P370, and P376.

As to expression, produced by the byssal gland.

Its subcellular location is the secreted. Functionally, provides adhesiveness to the mussel's foot. Mussels produce one of the strongest water insoluble glues. The mussel's adhesive is a bundle of threads, called a byssus, formed by a fibrous collagenous core coated with adhesive proteins. This is Foot protein 1 variant 2 from Perna viridis (Asian green mussel).